Reading from the N-terminus, the 352-residue chain is Histidine protein kinase SaeS (352 aa).

2 consecutive transmembrane segments (helical) span residues 9-29 (QIII…VIAY) and 41-61 (TLAI…SIFI). Residues 130–349 (NLAHDLKTPL…TMTLTLKKFQ (220 aa)) enclose the Histidine kinase domain. Phosphohistidine; by autocatalysis is present on His133.

Autophosphorylated.

The protein localises to the cell membrane. It carries out the reaction ATP + protein L-histidine = ADP + protein N-phospho-L-histidine.. Member of the two-component regulatory system SaeR/SaeS. Probably functions as a membrane-associated protein kinase that upon sensing the appropriate signal, autophosphorylates and in turn activates the cytosolic response regulator SaeR. The chain is Histidine protein kinase SaeS (saeS) from Staphylococcus epidermidis (strain ATCC 35984 / DSM 28319 / BCRC 17069 / CCUG 31568 / BM 3577 / RP62A).